The chain runs to 351 residues: 1-acylglycerol-3-phosphate O-acyltransferase ABHD5 (351 aa).

The AB hydrolase-1 domain maps to 79–184 (PLVLLHGFGG…LILVEPWGFP (106 aa)). Serine 124 carries the phosphoserine modification. Residues 329 to 334 (HYVYAD) carry the HXXXXD motif motif.

The protein belongs to the peptidase S33 family. ABHD4/ABHD5 subfamily. As to quaternary structure, interacts with ADRP and PLIN. Interacts with PNPLA2. Interacts with PLIN5; promotes interaction with PNPLA2.

Its subcellular location is the cytoplasm. It localises to the lipid droplet. It carries out the reaction a 1-acyl-sn-glycero-3-phosphate + an acyl-CoA = a 1,2-diacyl-sn-glycero-3-phosphate + CoA. The enzyme catalyses 1-(9Z-octadecenoyl)-sn-glycero-3-phosphate + (9Z)-octadecenoyl-CoA = 1,2-di-(9Z-octadecenoyl)-sn-glycero-3-phosphate + CoA. The catalysed reaction is 1-(9Z-octadecenoyl)-sn-glycero-3-phosphate + hexadecanoyl-CoA = 1-(9Z)-octadecenoyl-2-hexadecanoyl-sn-glycero-3-phosphate + CoA. It catalyses the reaction 1-(9Z-octadecenoyl)-sn-glycero-3-phosphate + octadecanoyl-CoA = 1-(9Z-octadecenoyl)-2-octadecanoyl-sn-glycero-3-phosphate + CoA. It carries out the reaction 1-(9Z-octadecenoyl)-sn-glycero-3-phosphate + (5Z,8Z,11Z,14Z)-eicosatetraenoyl-CoA = 1-(9Z)-octadecenoyl-2-(5Z,8Z,11Z,14Z)-eicosatetraenoyl-sn-glycero-3-phosphate + CoA. The enzyme catalyses eicosanoyl-CoA + 1-(9Z-octadecenoyl)-sn-glycero-3-phosphate = 1-(9Z)-octadecenoyl-2-eicosanoyl-sn-glycero-3-phosphate + CoA. The catalysed reaction is 1-hexadecanoyl-sn-glycero-3-phosphate + (9Z)-octadecenoyl-CoA = 1-hexadecanoyl-2-(9Z-octadecenoyl)-sn-glycero-3-phosphate + CoA. It catalyses the reaction 1-octadecanoyl-sn-glycero-3-phosphate + (9Z)-octadecenoyl-CoA = 1-octadecanoyl-2-(9Z-octadecenoyl)-sn-glycero-3-phosphate + CoA. It carries out the reaction 1-(5Z,8Z,11Z,14Z-eicosatetraenoyl)-sn-glycero-3-phosphate + (9Z)-octadecenoyl-CoA = 1-(5Z,8Z,11Z,14Z)-eicosatetraenoyl-2-(9Z)-octadecenoyl-sn-glycero-3-phosphate + CoA. With respect to regulation, acyltransferase activity is inhibited by detergents such as Triton X-100 and 3-[(3-cholamidopropyl)dimethylammonio]-1-propanesulfonate (CHAPS). Acyltransferase activity is inhibited by the presence of magnesium and calcium. Its function is as follows. Coenzyme A-dependent lysophosphatidic acid acyltransferase that catalyzes the transfer of an acyl group on a lysophosphatidic acid. Functions preferentially with 1-oleoyl-lysophosphatidic acid followed by 1-palmitoyl-lysophosphatidic acid, 1-stearoyl-lysophosphatidic acid and 1-arachidonoyl-lysophosphatidic acid as lipid acceptor. Functions preferentially with arachidonoyl-CoA followed by oleoyl-CoA as acyl group donors. Functions in phosphatidic acid biosynthesis. May regulate the cellular storage of triacylglycerol through activation of the phospholipase PNPLA2. Involved in keratinocyte differentiation. Regulates lipid droplet fusion. This Rattus norvegicus (Rat) protein is 1-acylglycerol-3-phosphate O-acyltransferase ABHD5.